The primary structure comprises 98 residues: EKC/KEOPS complex subunit GON7 (98 aa).

An N-acetylmethionine modification is found at M1. The disordered stretch occupies residues 55 to 98 (DAQGLAEDPDDALDGDDEDDAEDENNSGRTNSDGPSAKRPKPAS). Acidic residues predominate over residues 61–79 (EDPDDALDGDDEDDAEDEN).

As to quaternary structure, component of the EKC/KEOPS complex composed of at least GON7, TP53RK, TPRKB, OSGEP and LAGE3; the whole complex dimerizes.

It is found in the nucleus. In terms of biological role, component of the EKC/KEOPS complex that is required for the formation of a threonylcarbamoyl group on adenosine at position 37 (t(6)A37) in tRNAs that read codons beginning with adenine. The complex is probably involved in the transfer of the threonylcarbamoyl moiety of threonylcarbamoyl-AMP (TC-AMP) to the N6 group of A37. GON7 plays a supporting role to the catalytic subunit OSGEP in the complex. The chain is EKC/KEOPS complex subunit GON7 from Mus musculus (Mouse).